Consider the following 294-residue polypeptide: Proteasome subunit beta (294 aa).

The propeptide at 1–65 (MTADRPALRT…MESGDLAPHG (65 aa)) is removed in mature form; by autocatalysis. The Nucleophile role is filled by T66.

It belongs to the peptidase T1B family. In terms of assembly, the 20S proteasome core is composed of 14 alpha and 14 beta subunits that assemble into four stacked heptameric rings, resulting in a barrel-shaped structure. The two inner rings, each composed of seven catalytic beta subunits, are sandwiched by two outer rings, each composed of seven alpha subunits. The catalytic chamber with the active sites is on the inside of the barrel. Has a gated structure, the ends of the cylinder being occluded by the N-termini of the alpha-subunits. Is capped by the proteasome-associated ATPase, ARC.

It is found in the cytoplasm. It carries out the reaction Cleavage of peptide bonds with very broad specificity.. It participates in protein degradation; proteasomal Pup-dependent pathway. The formation of the proteasomal ATPase ARC-20S proteasome complex, likely via the docking of the C-termini of ARC into the intersubunit pockets in the alpha-rings, may trigger opening of the gate for substrate entry. Interconversion between the open-gate and close-gate conformations leads to a dynamic regulation of the 20S proteasome proteolysis activity. Component of the proteasome core, a large protease complex with broad specificity involved in protein degradation. This Rhodococcus jostii (strain RHA1) protein is Proteasome subunit beta.